Here is a 679-residue protein sequence, read N- to C-terminus: Stress-70 protein, mitochondrial (679 aa).

Residues 1–46 (MISASRAAAARLVGAAASRGPTAARHQDSWNGLSHEAFRLVSRRDY) constitute a mitochondrion transit peptide. The tract at residues 1–432 (MISASRAAAA…IQGGVLAGDV (432 aa)) is interaction with NFS1. Thr-63 and Asn-64 together coordinate ADP. The nucleotide-binding domain (NBD) stretch occupies residues 63–431 (TNSCVAVMEG…AIQGGVLAGD (369 aa)). An N6-acetyllysine modification is found at Lys-76. Phosphothreonine is present on Thr-87. N6-acetyllysine; alternate occurs at positions 135 and 138. An N6-succinyllysine; alternate mark is found at Lys-135 and Lys-138. Lys-143 is subject to N6-acetyllysine. Lys-206 bears the N6-acetyllysine; alternate mark. Lys-206 carries the N6-succinyllysine; alternate modification. At Lys-206 the chain carries N6-malonyllysine; alternate. An N6-acetyllysine mark is found at Lys-234 and Lys-288. Lys-300 carries the post-translational modification N6-acetyllysine; alternate. An N6-succinyllysine; alternate modification is found at Lys-300. ADP is bound by residues Glu-313, Lys-316, and Ser-320. Lys-368 bears the N6-succinyllysine mark. ADP contacts are provided by Gly-388 and Arg-391. Lys-394 carries the N6-succinyllysine modification. Ser-408 carries the phosphoserine modification. Residues 432–441 (VTDVLLLDVT) are interdomain linker. Positions 432 to 679 (VTDVLLLDVT…QKEDQKEEKQ (248 aa)) are interaction with FXN and ISCU. The interval 442-679 (PLSLGIETLG…QKEDQKEEKQ (238 aa)) is substrate-binding domain (SBD). An Omega-N-methylarginine modification is found at Arg-513. An N6-acetyllysine; alternate mark is found at Lys-567 and Lys-600. Residues Lys-567 and Lys-600 each carry the N6-succinyllysine; alternate modification. Position 610 is an N6-succinyllysine (Lys-610). Residue Lys-612 is modified to N6-acetyllysine. At Lys-646 the chain carries N6-acetyllysine; alternate. Lys-646 is subject to N6-succinyllysine; alternate. The disordered stretch occupies residues 656–679 (ASEREGSGSSGTGEQKEDQKEEKQ). Basic and acidic residues predominate over residues 669 to 679 (EQKEDQKEEKQ).

Belongs to the heat shock protein 70 family. As to quaternary structure, interacts strongly with the intermediate form of FXN and weakly with its mature form. Interacts with HSCB. Associates with the mitochondrial contact site and cristae organizing system (MICOS) complex, composed of at least MICOS10/MIC10, CHCHD3/MIC19, CHCHD6/MIC25, APOOL/MIC27, IMMT/MIC60, APOO/MIC23/MIC26 and QIL1/MIC13. This complex was also known under the names MINOS or MitOS complex. The MICOS complex associates with mitochondrial outer membrane proteins SAMM50, MTX1, MTX2 and DNAJC11, mitochondrial inner membrane protein TMEM11 and with HSPA9. Interacts with DNLZ, the interaction is required to prevent self-aggregation. Interacts with TESPA1. Interacts with PDPN. Interacts with NFU1, NFS1 and ISCU. Interacts with TP53; the interaction promotes TP53 degradation. Interacts (via SBD domain) with UBXN2A; the interaction with UBXN2A inhibits HSPA9 interaction with and degradation of TP53, thereby promotes TP53 translocation to the nucleus. Interacts with ITPR1 AND VDAC1; this interaction couples ITPR1 to VDAC1. Component of the TIM23 mitochondrial inner membrane pre-sequence translocase complex.

The protein resides in the mitochondrion. It localises to the nucleus. Its subcellular location is the nucleolus. It is found in the cytoplasm. The protein localises to the mitochondrion matrix. The catalysed reaction is ATP + H2O = ADP + phosphate + H(+). Its activity is regulated as follows. The chaperone activity is regulated by ATP-induced allosteric coupling of the nucleotide-binding (NBD) and substrate-binding (SBD) domains. ATP binding in the NBD leads to a conformational change in the NBD, which is transferred through the interdomain linker (IDL) to the substrate-binding domain (SBD). This elicits a reduced substrate affinity and a faster substrate exchange rate. Upon hydrolysis of ATP to ADP, the protein undergoes a conformational change that increases its affinity for substrate proteins. It cycles through repeated phases of ATP hydrolysis and nucleotide exchange, facilitating repeated cycles of substrate binding and release. Functions in collaboration with co-chaperones. Functions with the co-chaperone, DNLZ, to maintain solubility and regulate ATP hydrolysis. Nucleotide exchange factors, GRPEL1 and GRPEL2, accelerate nucleotide exchange. In terms of biological role, mitochondrial chaperone that plays a key role in mitochondrial protein import, folding, and assembly. Plays an essential role in the protein quality control system, the correct folding of proteins, the re-folding of misfolded proteins, and the targeting of proteins for subsequent degradation. These processes are achieved through cycles of ATP binding, ATP hydrolysis, and ADP release, mediated by co-chaperones. In mitochondria, it associates with the TIM (translocase of the inner membrane) protein complex to assist in the import and folding of mitochondrial proteins. Plays an important role in mitochondrial iron-sulfur cluster (ISC) biogenesis, interacts with and stabilizes ISC cluster assembly proteins FXN, NFU1, NFS1 and ISCU. Regulates erythropoiesis via stabilization of ISC assembly. Regulates mitochondrial calcium-dependent apoptosis by coupling two calcium channels, ITPR1 and VDAC1, at the mitochondria-associated endoplasmic reticulum (ER) membrane to facilitate calcium transport from the ER lumen to the mitochondria intermembrane space, providing calcium for the downstream calcium channel MCU, which releases it into the mitochondrial matrix. Although primarily located in the mitochondria, it is also found in other cellular compartments. In the cytosol, it associates with proteins involved in signaling, apoptosis, or senescence. It may play a role in cell cycle regulation via its interaction with and promotion of degradation of TP53. May play a role in the control of cell proliferation and cellular aging. Protects against reactive oxygen species (ROS). Extracellular HSPA9 plays a cytoprotective role by preventing cell lysis following immune attack by the membrane attack complex by disrupting formation of the complex. This is Stress-70 protein, mitochondrial from Homo sapiens (Human).